The chain runs to 368 residues: Transaldolase (368 aa).

Lys-140 acts as the Schiff-base intermediate with substrate in catalysis.

It belongs to the transaldolase family. Type 2 subfamily.

It is found in the cytoplasm. It catalyses the reaction D-sedoheptulose 7-phosphate + D-glyceraldehyde 3-phosphate = D-erythrose 4-phosphate + beta-D-fructose 6-phosphate. Its pathway is carbohydrate degradation; pentose phosphate pathway; D-glyceraldehyde 3-phosphate and beta-D-fructose 6-phosphate from D-ribose 5-phosphate and D-xylulose 5-phosphate (non-oxidative stage): step 2/3. Transaldolase is important for the balance of metabolites in the pentose-phosphate pathway. The sequence is that of Transaldolase from Thermobifida fusca (strain YX).